The sequence spans 463 residues: SCF E3 ubiquitin ligase complex F-box protein pof2 (463 aa).

Positions M1 to V42 constitute an F-box domain. LRR repeat units lie at residues C145–R170, C171–K196, D198–V220, G225–N247, E249–L271, K278–T299, S304–K326, C328–L353, P354–S378, and S380–N405.

Part of a SCF E3 ubiquitin ligase complex. Interacts with skp1.

The protein resides in the mitochondrion. Functionally, involved in substrate recognition in ubiquitin-dependent degradation. The protein is SCF E3 ubiquitin ligase complex F-box protein pof2 (pof2) of Schizosaccharomyces pombe (strain 972 / ATCC 24843) (Fission yeast).